We begin with the raw amino-acid sequence, 101 residues long: Early E3A 11.6 kDa glycoprotein (101 aa).

N-linked (GlcNAc...) asparagine; by host glycosylation is present at Asn-14. A helical membrane pass occupies residues 41 to 62 (MWWFSIALMFVCLIIMWLICCL).

This sequence belongs to the adenoviridae E3A-1 family. Post-translationally, N-glycosylated and probably also O-glycosylated.

Its subcellular location is the host nucleus membrane. This Human adenovirus C serotype 6 (HAdV-6) protein is Early E3A 11.6 kDa glycoprotein.